The following is a 237-amino-acid chain: Lycopene beta-cyclase (237 aa).

7 consecutive transmembrane segments (helical) span residues 3-23, 38-58, 80-100, 113-133, 137-157, 170-192, and 213-233; these read TSYL…LGVV, VGIL…YLIA, EYLF…ALPL, AVLG…LLTV, FYIG…WAVG, AAVL…DGIW, and AFFF…AWVL.

Belongs to the lycopene beta-cyclase family.

It localises to the cell membrane. The enzyme catalyses a carotenoid psi-end group = a carotenoid beta-end derivative. The catalysed reaction is all-trans-lycopene = gamma-carotene. It catalyses the reaction gamma-carotene = all-trans-beta-carotene. The protein operates within carotenoid biosynthesis; beta-carotene biosynthesis. Its function is as follows. Catalyzes the cyclization of both ends of lycopene to form beta-carotene, a retinal precursor. Is required for bacteriorhodopsin biogenesis, a light-driven proton pump with a covalently bound retinal cofactor. This Halobacterium salinarum (strain ATCC 29341 / DSM 671 / R1) protein is Lycopene beta-cyclase.